The primary structure comprises 37 residues: Desulforedoxin (37 aa).

Fe cation contacts are provided by C10, C13, C29, and C30.

It to the N-terminal section of desulfoferrodoxin. As to quaternary structure, homodimer. It depends on Fe cation as a cofactor.

Functionally, nonheme iron protein possibly involved in electron transport. In Megalodesulfovibrio gigas (Desulfovibrio gigas), this protein is Desulforedoxin (dsr).